We begin with the raw amino-acid sequence, 1342 residues long: DNA-directed RNA polymerase subunit beta (1342 aa).

This sequence belongs to the RNA polymerase beta chain family. The RNAP catalytic core consists of 2 alpha, 1 beta, 1 beta' and 1 omega subunit. When a sigma factor is associated with the core the holoenzyme is formed, which can initiate transcription.

The catalysed reaction is RNA(n) + a ribonucleoside 5'-triphosphate = RNA(n+1) + diphosphate. In terms of biological role, DNA-dependent RNA polymerase catalyzes the transcription of DNA into RNA using the four ribonucleoside triphosphates as substrates. The protein is DNA-directed RNA polymerase subunit beta of Aeromonas salmonicida (strain A449).